The sequence spans 707 residues: Nucleolin (707 aa).

The disordered stretch occupies residues 1–308 (MVKLAKAGKT…KVEGSEPTTP (308 aa)). 3 positions are modified to N6-acetyllysine: Lys-9, Lys-15, and Lys-16. Positions 24–46 (VEEDSEDEEMSEDEDDSSGEEEV) are enriched in acidic residues. Phosphoserine is present on residues Ser-28, Ser-34, Ser-40, and Ser-41. Positions 56–92 (ATTTPAKKVVVSQTKKAAVPTPAKKAAVTPGKKAVAT) are enriched in low complexity. The stretch at 58–65 (TTPAKKVV) is repeat 1. An 8 X 8 AA tandem repeats of X-T-P-X-K-K-X-X region spans residues 58 to 135 (TTPAKKVVVS…GAATPAKGAK (78 aa)). A Phosphoserine modification is found at Ser-67. A phosphothreonine mark is found at Thr-69, Thr-76, Thr-84, and Thr-92. Tandem repeats lie at residues 75-82 (PTPAKKAA), 83-90 (VTPGKKAV), and 91-98 (ATPAKKNI). At Lys-96 the chain carries N6-acetyllysine. A Phosphothreonine modification is found at Thr-99. One copy of the 5; truncated repeat lies at 99 to 104 (TPAKVI). Residue Lys-102 is modified to N6-acetyllysine. Repeat 6 spans residues 105-112 (PTPGKKGA). Residue Thr-106 is modified to Phosphothreonine. Lys-109 and Lys-116 each carry N6-acetyllysine. Tandem repeats lie at residues 120 to 127 (PTPGKKGA) and 128 to 135 (ATPAKGAK). At Thr-121 the chain carries Phosphothreonine. Low complexity predominate over residues 121–137 (TPGKKGAATPAKGAKNG). Lys-124 is modified (N6-acetyllysine). Phosphoserine is present on residues Ser-145 and Ser-157. The span at 145 to 170 (SDEDEDEEDEDDSDEDEDDEEEDEFE) shows a compositional bias: acidic residues. Over residues 179-188 (PAKAAPAAPA) the composition is skewed to low complexity. Residues Ser-189 and Ser-212 each carry the phosphoserine modification. Acidic residues predominate over residues 189–217 (SEDEEDDEDEDDEEDDDEEEEDDSEEEVM). At Thr-220 the chain carries Phosphothreonine. Acidic residues predominate over residues 241-273 (EEEDDEEEDEDDEDEDDEEEDDEDDDEEEEEEE). The span at 286-302 (MTKQKEAPEAKKQKVEG) shows a compositional bias: basic and acidic residues. Lys-299 is covalently cross-linked (Glycyl lysine isopeptide (Lys-Gly) (interchain with G-Cter in SUMO1); alternate). A Glycyl lysine isopeptide (Lys-Gly) (interchain with G-Cter in SUMO2); alternate cross-link involves residue Lys-299. Ser-303 bears the Phosphoserine mark. RRM domains follow at residues 309-385 (FNLF…KPKG) and 395-468 (RTLL…YTGE). Lys-320 carries the post-translational modification N6-acetyllysine. Lys-326 participates in a covalent cross-link: Glycyl lysine isopeptide (Lys-Gly) (interchain with G-Cter in SUMO1); alternate. Residue Lys-326 forms a Glycyl lysine isopeptide (Lys-Gly) (interchain with G-Cter in SUMO2); alternate linkage. Lys-350 bears the N6-acetyllysine mark. Ser-358 is subject to Phosphoserine. Phosphothreonine is present on Thr-369. A Glycyl lysine isopeptide (Lys-Gly) (interchain with G-Cter in SUMO2) cross-link involves residue Lys-372. Lys-379 is covalently cross-linked (Glycyl lysine isopeptide (Lys-Gly) (interchain with G-Cter in SUMO2); alternate). N6-acetyllysine; alternate is present on Lys-379. Lys-400 bears the N6-acetyllysine mark. Phosphoserine is present on Ser-403. A Phosphothreonine modification is found at Thr-407. Lys-429 and Lys-446 each carry N6-acetyllysine. 2 positions are modified to phosphoserine: Ser-460 and Ser-462. Lys-469 and Lys-478 each carry N6-acetyllysine. RRM domains follow at residues 487–561 (KTLV…LQGS) and 569–644 (KTLF…WAKP). A Glycyl lysine isopeptide (Lys-Gly) (interchain with G-Cter in SUMO2); alternate cross-link involves residue Lys-514. N6-acetyllysine; alternate is present on Lys-514. Lys-522 and Lys-569 each carry N6-acetyllysine. A Glycyl lysine isopeptide (Lys-Gly) (interchain with G-Cter in SUMO2); alternate cross-link involves residue Lys-574. Lys-574 carries the N6-acetyllysine; alternate modification. Position 577 is a phosphoserine (Ser-577). Residue Lys-586 forms a Glycyl lysine isopeptide (Lys-Gly) (interchain with G-Cter in SUMO1); alternate linkage. Residue Lys-586 forms a Glycyl lysine isopeptide (Lys-Gly) (interchain with G-Cter in SUMO2); alternate linkage. A phosphoserine mark is found at Ser-588 and Ser-616. A Glycyl lysine isopeptide (Lys-Gly) (interchain with G-Cter in SUMO2) cross-link involves residue Lys-621. Positions 639–707 (LDWAKPKGEG…KPQGKKTKFE (69 aa)) are disordered. Lys-643 bears the N6-acetyllysine mark. Over residues 647 to 696 (EGGFGGRGGGRGGFGGRGGGRGGRGGFGGRGRGGFGGRGGFRGGRGGGGD) the composition is skewed to gly residues. Asymmetric dimethylarginine is present on residues Arg-653, Arg-657, Arg-663, Arg-667, Arg-670, Arg-676, Arg-678, Arg-684, and Arg-688. Position 691 is an asymmetric dimethylarginine; alternate (Arg-691). At Arg-691 the chain carries Omega-N-methylarginine; alternate.

Identified in a IGF2BP1-dependent mRNP granule complex containing untranslated mRNAs. Component of the SWAP complex that consists of NPM1, NCL/nucleolin, PARP1 and SWAP70. Component of a complex which is at least composed of HTATSF1/Tat-SF1, the P-TEFb complex components CDK9 and CCNT1, RNA polymerase II, SUPT5H, and NCL/nucleolin. Interacts with AICDA. Interacts with APTX. Interacts with C1QBP. Interacts with ERBB4. Interacts (via C-terminus) with FMR1 isoform 6 (via N-terminus). Interacts with GZF1; this interaction is important for nucleolar localization of GZF1. Interacts with NSUN2. Interacts with NVL. Interacts (via N-terminus domain) with SETX. Interacts (via RRM1 and C-terminal RRM4/Arg/Gly-rich domains) with TERT; the interaction is important for nucleolar localization of TERT. Interacts with WDR46. Interacts with ZFP36. Interacts with LRRC34. Interacts with RRP1B. Interacts with HNRNPU; this interaction occurs during mitosis. Interacts with RIOK1; RIOK1 recruits NCL to PRMT5 for symmetrically methylation. Interacts with ZBTB7B. Interacts with MDK; this interaction promotes NCL clustering and lateral movements of this complex into lipid rafts leading to MDK internalization. Interacts with HDGF. Interacts with ALKBH2. Interacts with IGFBP5; this interaction is necessary for IGFBP5 localization to the nucleus. Interacts with DDX24 (when ubiquitinated); this interaction may be important during ribosome biogenesis. In terms of processing, some glutamate residues are glycylated by TTLL8. This modification occurs exclusively on glutamate residues and results in a glycine chain on the gamma-carboxyl group. Symmetrically methylated by PRMT5. Expressed in B-cells that have been induced to switch to various Ig isotypes.

Its subcellular location is the nucleus. It is found in the nucleolus. It localises to the cytoplasm. Nucleolin is the major nucleolar protein of growing eukaryotic cells. It is found associated with intranucleolar chromatin and pre-ribosomal particles. It induces chromatin decondensation by binding to histone H1. It is thought to play a role in pre-rRNA transcription and ribosome assembly. May play a role in the process of transcriptional elongation. Binds RNA oligonucleotides with 5'-UUAGGG-3' repeats more tightly than the telomeric single-stranded DNA 5'-TTAGGG-3' repeats. The chain is Nucleolin (Ncl) from Mus musculus (Mouse).